Reading from the N-terminus, the 204-residue chain is Holliday junction branch migration complex subunit RuvA (204 aa).

Positions 1-64 (MIGRLQGILL…EDAHLLFGFS (64 aa)) are domain I. The tract at residues 65–143 (AKTDRTLFRE…GIKQPDFFVE (79 aa)) is domain II. The segment at 144–155 (SSHVGAVDPVTT) is flexible linker. The segment at 156–204 (SPEVPAEEAVAALMALGYKASDAEKMVKRIAKPHLTSEQLIREALKAAL) is domain III.

The protein belongs to the RuvA family. In terms of assembly, homotetramer. Forms an RuvA(8)-RuvB(12)-Holliday junction (HJ) complex. HJ DNA is sandwiched between 2 RuvA tetramers; dsDNA enters through RuvA and exits via RuvB. An RuvB hexamer assembles on each DNA strand where it exits the tetramer. Each RuvB hexamer is contacted by two RuvA subunits (via domain III) on 2 adjacent RuvB subunits; this complex drives branch migration. In the full resolvosome a probable DNA-RuvA(4)-RuvB(12)-RuvC(2) complex forms which resolves the HJ.

It localises to the cytoplasm. Its function is as follows. The RuvA-RuvB-RuvC complex processes Holliday junction (HJ) DNA during genetic recombination and DNA repair, while the RuvA-RuvB complex plays an important role in the rescue of blocked DNA replication forks via replication fork reversal (RFR). RuvA specifically binds to HJ cruciform DNA, conferring on it an open structure. The RuvB hexamer acts as an ATP-dependent pump, pulling dsDNA into and through the RuvAB complex. HJ branch migration allows RuvC to scan DNA until it finds its consensus sequence, where it cleaves and resolves the cruciform DNA. This is Holliday junction branch migration complex subunit RuvA from Mannheimia succiniciproducens (strain KCTC 0769BP / MBEL55E).